We begin with the raw amino-acid sequence, 348 residues long: 4-hydroxy-3-methylbut-2-en-1-yl diphosphate synthase (flavodoxin) (348 aa).

4 residues coordinate [4Fe-4S] cluster: Cys263, Cys266, Cys298, and Glu305.

It belongs to the IspG family. [4Fe-4S] cluster is required as a cofactor.

The enzyme catalyses (2E)-4-hydroxy-3-methylbut-2-enyl diphosphate + oxidized [flavodoxin] + H2O + 2 H(+) = 2-C-methyl-D-erythritol 2,4-cyclic diphosphate + reduced [flavodoxin]. It functions in the pathway isoprenoid biosynthesis; isopentenyl diphosphate biosynthesis via DXP pathway; isopentenyl diphosphate from 1-deoxy-D-xylulose 5-phosphate: step 5/6. Its function is as follows. Converts 2C-methyl-D-erythritol 2,4-cyclodiphosphate (ME-2,4cPP) into 1-hydroxy-2-methyl-2-(E)-butenyl 4-diphosphate. This Dehalococcoides mccartyi (strain ATCC BAA-2100 / JCM 16839 / KCTC 5957 / BAV1) protein is 4-hydroxy-3-methylbut-2-en-1-yl diphosphate synthase (flavodoxin).